A 251-amino-acid polypeptide reads, in one-letter code: Uridylate kinase (251 aa).

Lysine 19–glycine 22 lines the ATP pocket. A UMP-binding site is contributed by glycine 61. Residues glycine 62 and arginine 66 each contribute to the ATP site. UMP-binding positions include aspartate 81 and isoleucine 142 to threonine 149. ATP contacts are provided by threonine 169, glutamine 170, tyrosine 175, and aspartate 178.

It belongs to the UMP kinase family. In terms of assembly, homohexamer.

It localises to the cytoplasm. The enzyme catalyses UMP + ATP = UDP + ADP. The protein operates within pyrimidine metabolism; CTP biosynthesis via de novo pathway; UDP from UMP (UMPK route): step 1/1. Its activity is regulated as follows. Inhibited by UTP. Its function is as follows. Catalyzes the reversible phosphorylation of UMP to UDP. The protein is Uridylate kinase of Hyphomonas neptunium (strain ATCC 15444).